Reading from the N-terminus, the 353-residue chain is Sphingosine 1-phosphate receptor 2 (353 aa).

Over 1–34 (MGSLYSEYLNPNKVQEHYNYTKETLETQETTSRQ) the chain is Extracellular. An N-linked (GlcNAc...) asparagine glycan is attached at N19. Residues 35-59 (VASAFIVILCCAIVVENLLVLIAVA) traverse the membrane as a helical segment. Residues 60–66 (RNSKFHS) are Cytoplasmic-facing. Residues 67–95 (AMYLFLGNLAASDLLAGVAFVANTLLSGS) traverse the membrane as a helical segment. Residues 96–109 (VTLRLTPVQWFARE) lie on the Extracellular side of the membrane. The helical transmembrane segment at 110–128 (GSAFITLSASVFSLLAIAI) threads the bilayer. The Cytoplasmic segment spans residues 129–147 (ERHVAIAKVKLYGSDKSCR). A helical membrane pass occupies residues 148-173 (MLLLIGASWLISLVLGGLPILGWNCL). Residues 174-189 (GHLEACSTVLPLYAKH) lie on the Extracellular side of the membrane. A helical membrane pass occupies residues 190-210 (YVLCVVTIFSIILLAIVALYV). Residues 211–233 (RIYCVVRSSHADMAAPQTLALLK) are Cytoplasmic-facing. The chain crosses the membrane as a helical span at residues 234–255 (TVTIVLGVFIVCWLPAFSILLL). Residues 256-271 (DYACPVHSCPILYKAH) lie on the Extracellular side of the membrane. Residues 272 to 292 (YFFAVSTLNSLLNPVIYTWRS) traverse the membrane as a helical segment. The Cytoplasmic segment spans residues 293–353 (RDLRREVLRP…PTFLEGNTVV (61 aa)). Residue C305 is the site of S-palmitoyl cysteine attachment.

This sequence belongs to the G-protein coupled receptor 1 family.

It is found in the cell membrane. Receptor for the lysosphingolipid sphingosine 1-phosphate (S1P). S1P is a bioactive lysophospholipid that elicits diverse physiological effects on most types of cells and tissues. When expressed in rat HTC4 hepatoma cells, is capable of mediating S1P-induced cell proliferation and suppression of apoptosis. Receptor for the chemokine-like protein FAM19A5. Mediates the inhibitory effect of FAM19A5 on vascular smooth muscle cell proliferation and migration. In lymphoid follicles, couples the binding of S1P to the activation of GNA13 and downstream inhibition of AKT activation leading to suppression of germinal center (GC) B cell growth and migration outside the GC niche. This Homo sapiens (Human) protein is Sphingosine 1-phosphate receptor 2 (S1PR2).